The chain runs to 25 residues: Chaperonin GroEL (25 aa).

Belongs to the chaperonin (HSP60) family. In terms of assembly, forms a cylinder of 14 subunits composed of two heptameric rings stacked back-to-back. Interacts with the co-chaperonin GroES.

Its subcellular location is the cytoplasm. It catalyses the reaction ATP + H2O + a folded polypeptide = ADP + phosphate + an unfolded polypeptide.. Functionally, together with its co-chaperonin GroES, plays an essential role in assisting protein folding. The GroEL-GroES system forms a nano-cage that allows encapsulation of the non-native substrate proteins and provides a physical environment optimized to promote and accelerate protein folding. This Delftia acidovorans (Pseudomonas acidovorans) protein is Chaperonin GroEL.